The following is a 217-amino-acid chain: MAMFLKSRGVRSCRDRRLLSDEEEETSQSSSYTLGSQASQSIQEEDVSDTDESDYSDEDEEIDLEEEYPSDEDPSEGSDSDPSWHPSDSDESDYSESDEDEATPGSQASRSSRVSPSTQQSSGLTPTPSFSRPRTRAPPRPPAPAPVRGRASAPPRPPAPVPQSTKDKVPNRPTRPVLRGPAPRRPPPPSSPNTYNKHMMETTPPIKGNNNYNWPWL.

Residues 1–217 form a disordered region; sequence MAMFLKSRGV…GNNNYNWPWL (217 aa). Positions 32 to 42 are enriched in polar residues; that stretch reads YTLGSQASQSI. A compositionally biased stretch (acidic residues) spans 43 to 79; that stretch reads QEEDVSDTDESDYSDEDEEIDLEEEYPSDEDPSEGSD. Positions 63-64 are interaction with host histones H3/H4; sequence DL. The segment at 81–84 is interaction with host H2A/H2B; it reads DPSW. Over residues 89–102 the composition is skewed to acidic residues; it reads SDESDYSESDEDEA. The segment covering 106-132 has biased composition (low complexity); it reads SQASRSSRVSPSTQQSSGLTPTPSFSR. The segment covering 136 to 145 has biased composition (pro residues); the sequence is RAPPRPPAPA. The span at 208-217 shows a compositional bias: polar residues; that stretch reads GNNNYNWPWL.

The protein belongs to the lymphocryptovirus BKRF4 family. As to quaternary structure, forms a complex with the host H3/H4 dimer and histone chaperone ASF1. Also forms a complex with host H2A/H2B dimer. Interacts (via C-terminus) with BGLF2; this interaction is important for infectious virion production.

The protein resides in the virion tegument. Its subcellular location is the host nucleus. The protein localises to the host cytoplasm. It is found in the host perinuclear region. Functionally, histone-binding protein that binds to histones H2A/H2B, H3/H4 and cellular chromatin to overcome the host DNA damage response triggered by the viral genome ends. Interferes with histone ubiquitination and recruitment of repair proteins. The protein is Tegument protein BKRF4 of Epstein-Barr virus (strain GD1) (HHV-4).